A 497-amino-acid polypeptide reads, in one-letter code: Cytochrome P450 2D6 (497 aa).

Residue Asp301 coordinates substrate. Cys443 is a heme binding site.

This sequence belongs to the cytochrome P450 family. The cofactor is heme.

The protein localises to the endoplasmic reticulum membrane. It is found in the microsome membrane. It carries out the reaction (5Z,8Z,11Z,14Z)-eicosatetraenoate + reduced [NADPH--hemoprotein reductase] + O2 = (8R,9S)-epoxy-(5Z,11Z,14Z)-eicosatrienoate + oxidized [NADPH--hemoprotein reductase] + H2O + H(+). The enzyme catalyses (5Z,8Z,11Z,14Z)-eicosatetraenoate + reduced [NADPH--hemoprotein reductase] + O2 = (11R,12S)-epoxy-(5Z,8Z,14Z)-eicosatrienoate + oxidized [NADPH--hemoprotein reductase] + H2O + H(+). It catalyses the reaction (5Z,8Z,11Z,14Z)-eicosatetraenoate + reduced [NADPH--hemoprotein reductase] + O2 = (14S,15R)-epoxy-(5Z,8Z,11Z)-eicosatrienoate + oxidized [NADPH--hemoprotein reductase] + H2O + H(+). The catalysed reaction is N-(5Z,8Z,11Z,14Z-eicosatetraenoyl)-ethanolamine + reduced [NADPH--hemoprotein reductase] + O2 = N-(8,9-epoxy-5Z,11Z,14Z-eicosatrienoyl)-ethanolamine + oxidized [NADPH--hemoprotein reductase] + H2O + H(+). It carries out the reaction N-(5Z,8Z,11Z,14Z-eicosatetraenoyl)-ethanolamine + reduced [NADPH--hemoprotein reductase] + O2 = N-(11,12-epoxy-5Z,8Z,14Z-eicosatrienoyl)-ethanolamine + oxidized [NADPH--hemoprotein reductase] + H2O + H(+). The enzyme catalyses N-(5Z,8Z,11Z,14Z-eicosatetraenoyl)-ethanolamine + reduced [NADPH--hemoprotein reductase] + O2 = N-(14,15-epoxy-5Z,8Z,11Z-eicosatrienoyl)-ethanolamine + oxidized [NADPH--hemoprotein reductase] + H2O + H(+). It catalyses the reaction N-(5Z,8Z,11Z,14Z-eicosatetraenoyl)-ethanolamine + reduced [NADPH--hemoprotein reductase] + O2 = N-(20-hydroxy-5Z,8Z,11Z,14Z-eicosatetraenoyl)-ethanolamine + oxidized [NADPH--hemoprotein reductase] + H2O + H(+). The catalysed reaction is (5Z,8Z,11Z,14Z,17Z)-eicosapentaenoate + reduced [NADPH--hemoprotein reductase] + O2 = (17S,18R)-epoxy-(5Z,8Z,11Z,14Z)-eicosatetraenoate + oxidized [NADPH--hemoprotein reductase] + H2O + H(+). It carries out the reaction (4Z,7Z,10Z,13Z,16Z,19Z)-docosahexaenoate + reduced [NADPH--hemoprotein reductase] + O2 = (19R,20S)-epoxy-(4Z,7Z,10Z,13Z,16Z)-docosapentaenoate + oxidized [NADPH--hemoprotein reductase] + H2O + H(+). The enzyme catalyses (4Z,7Z,10Z,13Z,16Z,19Z)-docosahexaenoate + reduced [NADPH--hemoprotein reductase] + O2 = (19S,20R)-epoxy-(4Z,7Z,10Z,13Z,16Z)-docosapentaenoate + oxidized [NADPH--hemoprotein reductase] + H2O + H(+). It catalyses the reaction cholesterol + reduced [NADPH--hemoprotein reductase] + O2 = 25-hydroxycholesterol + oxidized [NADPH--hemoprotein reductase] + H2O + H(+). The catalysed reaction is all-trans-retinol + reduced [NADPH--hemoprotein reductase] + O2 = all-trans-retinal + oxidized [NADPH--hemoprotein reductase] + 2 H2O + H(+). Its pathway is cofactor metabolism; retinol metabolism. It functions in the pathway lipid metabolism; fatty acid metabolism. The protein operates within steroid metabolism; cholesterol metabolism. Its function is as follows. A cytochrome P450 monooxygenase involved in the metabolism of fatty acids, steroids and retinoids. Mechanistically, uses molecular oxygen inserting one oxygen atom into a substrate, and reducing the second into a water molecule, with two electrons provided by NADPH via cytochrome P450 reductase (NADPH--hemoprotein reductase). Catalyzes the epoxidation of double bonds of polyunsaturated fatty acids (PUFA). Metabolizes endocannabinoid arachidonoylethanolamide (anandamide) to 20-hydroxyeicosatetraenoic acid ethanolamide (20-HETE-EA) and 8,9-, 11,12-, and 14,15-epoxyeicosatrienoic acid ethanolamides (EpETrE-EAs), potentially modulating endocannabinoid system signaling. Catalyzes the hydroxylation of carbon-hydrogen bonds. Metabolizes cholesterol toward 25-hydroxycholesterol, a physiological regulator of cellular cholesterol homeostasis. Catalyzes the oxidative transformations of all-trans retinol to all-trans retinal, a precursor for the active form all-trans-retinoic acid. Also involved in the oxidative metabolism of drugs such as antiarrhythmics, adrenoceptor antagonists, and tricyclic antidepressants. This Pan paniscus (Pygmy chimpanzee) protein is Cytochrome P450 2D6 (CYP2D6).